Here is a 424-residue protein sequence, read N- to C-terminus: Hemagglutinin-esterase (424 aa).

Positions 1-16 (MFLLPRFVLVSCIIGS) are cleaved as a signal peptide. The segment at 7–127 (FVLVSCIIGS…SNDIWMQNKG (121 aa)) is esterase domain 1. Residues 17-392 (LGFDNPPTNV…PICVYDPLPI (376 aa)) are Virion surface-facing. Catalysis depends on Ser40, which acts as the Nucleophile. A disulfide bond links Cys44 and Cys65. Residues Asn54, Asn89, Asn153, Asn236, and Asn301 are each glycosylated (N-linked (GlcNAc...) asparagine; by host). 3 disulfide bridges follow: Cys113-Cys162, Cys197-Cys276, and Cys205-Cys249. The interval 128-266 (LFYTQVYKNM…GNYLAISNEL (139 aa)) is receptor binding. Residues 267–379 (LLTVPTKAIC…RCPTAADINT (113 aa)) are esterase domain 2. A disulfide bridge connects residues Cys307 and Cys312. A glycan (N-linked (GlcNAc...) asparagine; by host) is linked at Asn316. Residues Asp326 and His329 each act as charge relay system in the active site. Cys347 and Cys371 are disulfide-bonded. A glycan (N-linked (GlcNAc...) asparagine; by host) is linked at Asn358. Residues 393–413 (IFLGILLGVAVIIIVVLLLYF) traverse the membrane as a helical segment. At 414–424 (MVDNGTRLHDA) the chain is on the intravirion side. A glycan (N-linked (GlcNAc...) asparagine; by host) is linked at Asn417.

Belongs to the influenza type C/coronaviruses hemagglutinin-esterase family. In terms of assembly, homodimer; disulfide-linked. Forms a complex with the M protein in the pre-Golgi. Associates then with S-M complex to form a ternary complex S-M-HE. In terms of processing, N-glycosylated in the host RER.

The protein resides in the virion membrane. Its subcellular location is the host cell membrane. The enzyme catalyses N-acetyl-9-O-acetylneuraminate + H2O = N-acetylneuraminate + acetate + H(+). It catalyses the reaction N-acetyl-4-O-acetylneuraminate + H2O = N-acetylneuraminate + acetate + H(+). Functionally, structural protein that makes short spikes at the surface of the virus. Contains receptor binding and receptor-destroying activities. Mediates de-O-acetylation of N-acetyl-4-O-acetylneuraminic acid, which is probably the receptor determinant recognized by the virus on the surface of erythrocytes and susceptible cells. This receptor-destroying activity is important for virus release as it probably helps preventing self-aggregation and ensures the efficient spread of the progeny virus from cell to cell. May serve as a secondary viral attachment protein for initiating infection, the spike protein being the major one. May become a target for both the humoral and the cellular branches of the immune system. The polypeptide is Hemagglutinin-esterase (Bovine coronavirus (strain Ontario) (BCoV)).